Consider the following 315-residue polypeptide: MEHFIDTYLYELRKVRDEKTIKKKEYLLKHLQDYSEDLPAFDQSEIFSFYEYLKNKNLKETTIRDILKEVRLFYEWLQEQGLNLKFDEKALKKLFQSKKSQEALKSKKKYYSDDEINLILNAIRGAVEGISTKHPIYYILTIFLLCSGLRISEAVKVRKKDFEVKRILTEEGEEKEVWFVKVREGKFGKERKALIYFFRPEWKRIFEERLKKLKPEDFFFTYAVKYPKSVKVFTLTDKTAKWFYWKLEKELREKGYEIEVNAHRFRNTYITKLATKGFPVNLIADWVGHSKISTTMDVYMEAEREKQLEAILERI.

The region spanning 1–78 is the Core-binding (CB) domain; it reads MEHFIDTYLY…EVRLFYEWLQ (78 aa). A Tyr recombinase domain is found at 106 to 313; sequence SKKKYYSDDE…REKQLEAILE (208 aa). Catalysis depends on residues arginine 150, lysine 186, histidine 263, arginine 266, and histidine 289. The O-(3'-phospho-DNA)-tyrosine intermediate role is filled by tyrosine 299.

The protein belongs to the 'phage' integrase family.

May function as an integrase. This Aquifex aeolicus (strain VF5) protein is Probable integrase/recombinase aq_aa09.